The primary structure comprises 514 residues: Membrane-bound lytic murein transglycosylase F (514 aa).

The signal sequence occupies residues 1–30 (MKKLKINYLFIGILTLLLAAALWPSIPWFG). The interval 31–269 (KTENHIAAIQ…RIEEKYLGHG (239 aa)) is non-LT domain. The segment at 270-514 (DDFDYVDTRS…LFTPQKKEEK (245 aa)) is LT domain. The active site involves Glu-314.

In the N-terminal section; belongs to the bacterial solute-binding protein 3 family. The protein in the C-terminal section; belongs to the transglycosylase Slt family.

The protein resides in the cell outer membrane. It carries out the reaction Exolytic cleavage of the (1-&gt;4)-beta-glycosidic linkage between N-acetylmuramic acid (MurNAc) and N-acetylglucosamine (GlcNAc) residues in peptidoglycan, from either the reducing or the non-reducing ends of the peptidoglycan chains, with concomitant formation of a 1,6-anhydrobond in the MurNAc residue.. In terms of biological role, murein-degrading enzyme that degrades murein glycan strands and insoluble, high-molecular weight murein sacculi, with the concomitant formation of a 1,6-anhydromuramoyl product. Lytic transglycosylases (LTs) play an integral role in the metabolism of the peptidoglycan (PG) sacculus. Their lytic action creates space within the PG sacculus to allow for its expansion as well as for the insertion of various structures such as secretion systems and flagella. The sequence is that of Membrane-bound lytic murein transglycosylase F from Salmonella paratyphi B (strain ATCC BAA-1250 / SPB7).